Here is a 79-residue protein sequence, read N- to C-terminus: Schistosomin (79 aa).

In terms of processing, contains four disulfide bonds. Growth-controlling neurosecretory light green cells, in the cerebral ganglia of the CNS.

The protein localises to the secreted. Its function is as follows. Anti-gonadotropic neuropeptide. It also decreases the binding capacity of calfluxin to membrane-bound receptors of the albumen gland. This leads to inhibition of the reproductive activities of the infected snail. This Lymnaea stagnalis (Great pond snail) protein is Schistosomin.